A 394-amino-acid polypeptide reads, in one-letter code: D-aspartate oxidase (394 aa).

FAD-binding residues include I19, A57, S58, and G62. Residues 190–210 (LIGHEPTAGVIVCVGLGALVL) form a helical membrane-spanning segment. An N-linked (GlcNAc...) asparagine glycan is attached at N214. 3 residues coordinate FAD: R342, G373, and Q375.

It belongs to the DAMOX/DASOX family. FAD is required as a cofactor.

It is found in the membrane. The catalysed reaction is D-aspartate + O2 + H2O = oxaloacetate + H2O2 + NH4(+). Selectively catalyzes the oxidative deamination of acidic amino acids. Protects the organism from the toxicity of D-amino acids. Enables the organism to utilize D-amino acids as a source of nutrients. Enables the organism to utilize D-aspartate and D-asparagine as a source of nitrogen. May play a role in its interaction with the host. This chain is D-aspartate oxidase, found in Cryptococcus neoformans var. grubii serotype A (strain H99 / ATCC 208821 / CBS 10515 / FGSC 9487) (Filobasidiella neoformans var. grubii).